A 646-amino-acid chain; its full sequence is Zinc finger protein 493 (646 aa).

The segment at 26–48 (FQCDKYVKVFHKLLNSNRHNTKH) adopts a C2H2-type 1; degenerate zinc-finger fold. 2 consecutive C2H2-type zinc fingers follow at residues 54 to 76 (FKCKKCGKSFCMLLHLCQHKRIH) and 82 to 104 (YRCEECGKAFIWFSTLTRHRRVH). The C2H2-type 4; degenerate zinc finger occupies 109–131 (SYKYECGKSFNQDSNLTTHKRIH). Residues 137-159 (YKCEECGTSFYQFSYLTRHKLIH) form a C2H2-type 5 zinc finger. The C2H2-type 6; degenerate zinc finger occupies 165-187 (YKCEQYGKTFNQSSTLTGHKIIH). The C2H2-type 7; degenerate zinc-finger motif lies at 193 to 215 (YKCEECGKAFSIFSTPTKHKIIH). The C2H2-type 8; degenerate zinc-finger motif lies at 221–243 (HRCEEYCKAYKESSHLTTHKRIH). 14 consecutive C2H2-type zinc fingers follow at residues 249–271 (YKCEECGKAFSIFSTLTKHKIIH), 277–299 (HRCEECGKAYKESSHLTTHKRIH), 305–327 (YKCEECGKTFSVFSILTKHKIIH), 333–355 (YKCEECGKAFKRSSTLTKHRIIH), 361–383 (YKCEECGKAFNQSSTLSIHKIIH), 389–411 (YKCEECGKAFKRSSTLTIHKMIH), 417–439 (YKCEECGKAFNRSSHLTTHKRIH), 445–467 (YKCKECGKSFSVFSTLTKHKIIH), 473–495 (YKCEECGKAFNRSSILSIHKKIH), 501–523 (YKCEECGKAFKRSSHLAGHKQIH), 529–551 (YKCEECGKAFSIFSTLTKHKIIH), 557–579 (YKCEKCGKTFYRFSNLNTHKIIH), 585–607 (CKCEECGKAFNHSSNLIKHKLIH), and 613–635 (YKCEACGKAFRRSSHLSRHKIIH).

It localises to the nucleus. Functionally, may be involved in transcriptional regulation. The chain is Zinc finger protein 493 (ZNF493) from Homo sapiens (Human).